The sequence spans 154 residues: Large ribosomal subunit protein uL13 (154 aa).

The protein belongs to the universal ribosomal protein uL13 family. Part of the 50S ribosomal subunit.

In terms of biological role, this protein is one of the early assembly proteins of the 50S ribosomal subunit, although it is not seen to bind rRNA by itself. It is important during the early stages of 50S assembly. The protein is Large ribosomal subunit protein uL13 of Borrelia garinii subsp. bavariensis (strain ATCC BAA-2496 / DSM 23469 / PBi) (Borreliella bavariensis).